The sequence spans 613 residues: Proteasome-associated ATPase (613 aa).

The interval 1-29 (MSESERSEGFPEGFAGAGSGSLSSEDAAE) is disordered. Residues 23-100 (SSEDAAELEA…LREEVDRLGQ (78 aa)) adopt a coiled-coil conformation. 300–305 (GCGKTL) contacts ATP. An Isoglutamyl lysine isopeptide (Lys-Gln) (interchain with Q-Cter in protein Pup) cross-link involves residue lysine 595. The tract at residues 612 to 613 (YL) is docks into pockets in the proteasome alpha-ring.

The protein belongs to the AAA ATPase family. In terms of assembly, homohexamer. Assembles into a hexameric ring structure that caps the 20S proteasome core. Strongly interacts with the prokaryotic ubiquitin-like protein Pup through a hydrophobic interface; the interacting region of ARC lies in its N-terminal coiled-coil domain. There is one Pup binding site per ARC hexamer ring. Upon ATP-binding, the C-terminus of ARC interacts with the alpha-rings of the proteasome core, possibly by binding to the intersubunit pockets.

Its pathway is protein degradation; proteasomal Pup-dependent pathway. In terms of biological role, ATPase which is responsible for recognizing, binding, unfolding and translocation of pupylated proteins into the bacterial 20S proteasome core particle. May be essential for opening the gate of the 20S proteasome via an interaction with its C-terminus, thereby allowing substrate entry and access to the site of proteolysis. Thus, the C-termini of the proteasomal ATPase may function like a 'key in a lock' to induce gate opening and therefore regulate proteolysis. The sequence is that of Proteasome-associated ATPase from Mycolicibacterium smegmatis (strain ATCC 700084 / mc(2)155) (Mycobacterium smegmatis).